We begin with the raw amino-acid sequence, 270 residues long: Aquaporin-11 (270 aa).

The next 2 membrane-spanning stretches (helical) occupy residues 5–25 (IMTMYPLLISILHILFIISIC) and 59–79 (FELGVITQIYGFSAYALGLFF). An NPA 1 motif is present at residues 94-96 (DPS). The helical transmembrane segment at 120-140 (IMGAAVSYRFAKIFWSFGLMA) threads the bilayer. N148 carries an N-linked (GlcNAc...) asparagine glycan. A run of 2 helical transmembrane segments spans residues 153–173 (ASLQVPVLIGLGFETFETIVN) and 184–204 (MLISAISDVCITFFGLFVSGG). The NPA 2 signature appears at 207 to 209 (NPT). A helical transmembrane segment spans residues 220-240 (GLSGPSFFLVYWFGPILGSSI).

Belongs to the MIP/aquaporin (TC 1.A.8) family.

It is found in the membrane. The catalysed reaction is H2O(in) = H2O(out). Functionally, probable intracellular unorthodox aquaporin that may modulate the water content and osmolytes during anhydrobiosis. This chain is Aquaporin-11, found in Milnesium tardigradum (Water bear).